Here is a 539-residue protein sequence, read N- to C-terminus: Membrane protein insertase YidC (539 aa).

The chain crosses the membrane as a helical span at residues 7-27 (IIAIALSFVVLVGWSYLADHM). The disordered stretch occupies residues 32–64 (QPAPQAQQEETAPSASQAAPQSASQAAAPAPRA). Transmembrane regions (helical) follow at residues 347 to 367 (YVGNYGVAIILLTVVIKLVFW), 418 to 438 (GGCLPMLVQIPVFFGLYQALL), and 498 to 518 (IMMFMPVVFTFMFLSFPSGLV).

Belongs to the OXA1/ALB3/YidC family. Type 1 subfamily. In terms of assembly, interacts with the Sec translocase complex via SecD. Specifically interacts with transmembrane segments of nascent integral membrane proteins during membrane integration.

It localises to the cell inner membrane. Required for the insertion and/or proper folding and/or complex formation of integral membrane proteins into the membrane. Involved in integration of membrane proteins that insert both dependently and independently of the Sec translocase complex, as well as at least some lipoproteins. Aids folding of multispanning membrane proteins. The polypeptide is Membrane protein insertase YidC (Nitratidesulfovibrio vulgaris (strain DSM 19637 / Miyazaki F) (Desulfovibrio vulgaris)).